The sequence spans 438 residues: MLDLEIVPEISLGCDAWEFVLGMHFSQAIAIIQSQVGIIKGVQVLYSDTTPLGVDIIINLPQDGVRLIFDPVSQRLKTIEVFNMKLVKLRYFGVYFNSPEVLPSIEQIEHSFGATHPGVYDAAKQLFALHFRGLSFYFPVDSKLHSGYAHGLSSLVFLNGASPVVSKMSLYAGSNVLENRVPSLPLSCYHRQMYLESATVLRTAFGHTKGLKLKLFTEGSGRALEPRRQCFTRELLFGDSCEDVATSLGAPNRIFFKSEDKMKIHSSSVNRQAQSKRSDIFFNYFTLGIDVLFDARTQTCKKFILHTNYPGHFNFNMYHRCEFQFLLQADHPSMSDSGHDLVTPTKQEHVNITAYTKWDAISSALATSERPVVLHRASSTNTANPFGSTFCYGYQDLIFEVMPNSHIASVTLYNTAPPRQPAHSWQQHKMQDIRLTVA.

This sequence belongs to the PHAF1 family.

Its subcellular location is the cytoplasm. It localises to the preautophagosomal structure. May play a regulatory role in autophagic activity. The polypeptide is PHAF1 protein CG7083 (Drosophila melanogaster (Fruit fly)).